A 380-amino-acid chain; its full sequence is Cytochrome b (380 aa).

4 helical membrane-spanning segments follow: residues 34-54 (FGSL…FLAM), 78-99 (WLLR…YFHI), 114-134 (WNIG…GYVL), and 179-199 (FFTF…IHLL). Residues histidine 84 and histidine 98 each contribute to the heme b site. Positions 183 and 197 each coordinate heme b. An a ubiquinone-binding site is contributed by histidine 202. A run of 4 helical transmembrane segments spans residues 227 to 247 (YKDL…STFA), 289 to 309 (LGGV…PIIH), 321 to 341 (IAKT…WIGG), and 348 to 368 (FITI…LLIP).

This sequence belongs to the cytochrome b family. As to quaternary structure, the cytochrome bc1 complex contains 3 respiratory subunits (MT-CYB, CYC1 and UQCRFS1), 2 core proteins (UQCRC1 and UQCRC2) and probably 6 low-molecular weight proteins. Heme b serves as cofactor.

Its subcellular location is the mitochondrion inner membrane. In terms of biological role, component of the ubiquinol-cytochrome c reductase complex (complex III or cytochrome b-c1 complex) that is part of the mitochondrial respiratory chain. The b-c1 complex mediates electron transfer from ubiquinol to cytochrome c. Contributes to the generation of a proton gradient across the mitochondrial membrane that is then used for ATP synthesis. In Pelophylax nigromaculatus (Black-spotted frog), this protein is Cytochrome b (mt-cyb).